Reading from the N-terminus, the 397-residue chain is Probable peptidoglycan glycosyltransferase FtsW (397 aa).

Residues 1–26 (MSPRNSALERFRQHQKIPEKRWQRLA) are Cytoplasmic-facing. The helical transmembrane segment at 27-47 (FPDVGLLLCWLALIVIGMVMV) threads the bilayer. Residues 48 to 69 (TSSSLSEAHVERLSTHHFAIRQ) lie on the Periplasmic side of the membrane. The chain crosses the membrane as a helical span at residues 70-90 (GIFYVGSSIFAYIAFMLGTNF). Residues 91–96 (YREKAK) lie on the Cytoplasmic side of the membrane. Residues 97 to 117 (FILGLAFLGLLLVYAPGIGVV) traverse the membrane as a helical segment. Over 118–126 (VNGSRRWLN) the chain is Periplasmic. Residues 127-147 (LGVINLQVGEFAKLAVFIFTA) traverse the membrane as a helical segment. The Cytoplasmic segment spans residues 148 to 159 (AYLQHHTQRLDH). Residues 160–180 (SWQPIIGLLAVTACFALMFYL) traverse the membrane as a helical segment. Topologically, residues 181-185 (QPDFG) are periplasmic. The chain crosses the membrane as a helical span at residues 186–206 (TMVVIVATVLGMLFLSGVSIW). Position 207 (Arg-207) is a topological domain, cytoplasmic. Residues 208–228 (LLLLGVLIAPAMVWVLISESY) traverse the membrane as a helical segment. Residues 229–294 (RLRRLTTFIN…IFSIIAEETG (66 aa)) are Periplasmic-facing. Residues 295 to 315 (LVGALIVMAILMILVWRAFAI) traverse the membrane as a helical segment. The Cytoplasmic portion of the chain corresponds to 316–328 (GYLADRMRKRFSS). A helical transmembrane segment spans residues 329-349 (LLAYGIGLWLGLQSLINIGVT). The Periplasmic portion of the chain corresponds to 350-359 (TGALPTKGLT). The helical transmembrane segment at 360-380 (LPLISYGGSSILMTSIALAIL) threads the bilayer. Topologically, residues 381 to 397 (ARIDAESRFIARLEGKI) are cytoplasmic.

The protein belongs to the SEDS family. FtsW subfamily.

It is found in the cell inner membrane. The enzyme catalyses [GlcNAc-(1-&gt;4)-Mur2Ac(oyl-L-Ala-gamma-D-Glu-L-Lys-D-Ala-D-Ala)](n)-di-trans,octa-cis-undecaprenyl diphosphate + beta-D-GlcNAc-(1-&gt;4)-Mur2Ac(oyl-L-Ala-gamma-D-Glu-L-Lys-D-Ala-D-Ala)-di-trans,octa-cis-undecaprenyl diphosphate = [GlcNAc-(1-&gt;4)-Mur2Ac(oyl-L-Ala-gamma-D-Glu-L-Lys-D-Ala-D-Ala)](n+1)-di-trans,octa-cis-undecaprenyl diphosphate + di-trans,octa-cis-undecaprenyl diphosphate + H(+). Its pathway is cell wall biogenesis; peptidoglycan biosynthesis. Its function is as follows. Peptidoglycan polymerase that is essential for cell division. The chain is Probable peptidoglycan glycosyltransferase FtsW from Dichelobacter nodosus (strain VCS1703A).